A 259-amino-acid chain; its full sequence is Deoxyribose-phosphate aldolase (259 aa).

Asp-102 (proton donor/acceptor) is an active-site residue. Catalysis depends on Lys-167, which acts as the Schiff-base intermediate with acetaldehyde. Lys-201 (proton donor/acceptor) is an active-site residue.

The protein belongs to the DeoC/FbaB aldolase family. DeoC type 2 subfamily.

It is found in the cytoplasm. It catalyses the reaction 2-deoxy-D-ribose 5-phosphate = D-glyceraldehyde 3-phosphate + acetaldehyde. It participates in carbohydrate degradation; 2-deoxy-D-ribose 1-phosphate degradation; D-glyceraldehyde 3-phosphate and acetaldehyde from 2-deoxy-alpha-D-ribose 1-phosphate: step 2/2. Functionally, catalyzes a reversible aldol reaction between acetaldehyde and D-glyceraldehyde 3-phosphate to generate 2-deoxy-D-ribose 5-phosphate. In Shigella boydii serotype 4 (strain Sb227), this protein is Deoxyribose-phosphate aldolase.